Consider the following 153-residue polypeptide: Putative type II secretion system protein M (153 aa).

The Cytoplasmic segment spans residues 1–16; the sequence is MIKSWWAEKSTSEKQI. Residues 17–37 traverse the membrane as a helical segment; the sequence is VAALAVLSLGVFCWLGVIKPI. The Periplasmic segment spans residues 38–153; that stretch reads DTYIAEHQSH…LRHLSFREQQ (116 aa).

This sequence belongs to the GSP M family. Type II secretion system is composed of four main components: the outer membrane complex, the inner membrane complex, the cytoplasmic secretion ATPase and the periplasm-spanning pseudopilus. Forms homodimers. Interacts with GspL. Interacts with GspE and GspF.

Its subcellular location is the cell inner membrane. Functionally, inner membrane component of the type II secretion system required for the energy-dependent secretion of extracellular factors such as proteases and toxins from the periplasm. Plays a role in the complex assembly and recruits GspL resulting in a stable complex in the inner membrane. Provides thus a link between the energy-providing GspE protein in the cytoplasm and the rest of the T2SS machinery. This chain is Putative type II secretion system protein M (gspM), found in Escherichia coli (strain K12).